Here is a 486-residue protein sequence, read N- to C-terminus: Protein nucleotidyltransferase YdiU (486 aa).

Positions 90, 92, 93, 113, 125, 126, 176, and 183 each coordinate ATP. The Proton acceptor role is filled by Asp-252. Residues Asn-253 and Asp-262 each contribute to the Mg(2+) site. Asp-262 serves as a coordination point for ATP.

The protein belongs to the SELO family. The cofactor is Mg(2+). Mn(2+) serves as cofactor.

The enzyme catalyses L-seryl-[protein] + ATP = 3-O-(5'-adenylyl)-L-seryl-[protein] + diphosphate. It catalyses the reaction L-threonyl-[protein] + ATP = 3-O-(5'-adenylyl)-L-threonyl-[protein] + diphosphate. It carries out the reaction L-tyrosyl-[protein] + ATP = O-(5'-adenylyl)-L-tyrosyl-[protein] + diphosphate. The catalysed reaction is L-histidyl-[protein] + UTP = N(tele)-(5'-uridylyl)-L-histidyl-[protein] + diphosphate. The enzyme catalyses L-seryl-[protein] + UTP = O-(5'-uridylyl)-L-seryl-[protein] + diphosphate. It catalyses the reaction L-tyrosyl-[protein] + UTP = O-(5'-uridylyl)-L-tyrosyl-[protein] + diphosphate. In terms of biological role, nucleotidyltransferase involved in the post-translational modification of proteins. It can catalyze the addition of adenosine monophosphate (AMP) or uridine monophosphate (UMP) to a protein, resulting in modifications known as AMPylation and UMPylation. The polypeptide is Protein nucleotidyltransferase YdiU (Stutzerimonas stutzeri (strain A1501) (Pseudomonas stutzeri)).